The sequence spans 501 residues: Glutamyl-tRNA(Gln) amidotransferase subunit A (501 aa).

Residues Lys80 and Ser155 each act as charge relay system in the active site. The Acyl-ester intermediate role is filled by Ser179.

The protein belongs to the amidase family. GatA subfamily. In terms of assembly, heterotrimer of A, B and C subunits.

The enzyme catalyses L-glutamyl-tRNA(Gln) + L-glutamine + ATP + H2O = L-glutaminyl-tRNA(Gln) + L-glutamate + ADP + phosphate + H(+). Functionally, allows the formation of correctly charged Gln-tRNA(Gln) through the transamidation of misacylated Glu-tRNA(Gln) in organisms which lack glutaminyl-tRNA synthetase. The reaction takes place in the presence of glutamine and ATP through an activated gamma-phospho-Glu-tRNA(Gln). This Cupriavidus pinatubonensis (strain JMP 134 / LMG 1197) (Cupriavidus necator (strain JMP 134)) protein is Glutamyl-tRNA(Gln) amidotransferase subunit A.